The following is a 247-amino-acid chain: Probable transcriptional regulatory protein YPO2055/y2255/YP_1898 (247 aa).

The protein belongs to the TACO1 family.

It is found in the cytoplasm. The sequence is that of Probable transcriptional regulatory protein YPO2055/y2255/YP_1898 from Yersinia pestis.